A 186-amino-acid chain; its full sequence is Chromophore lyase CpcS/CpeS 1 (186 aa).

The protein belongs to the CpcS/CpeS biliprotein lyase family.

In terms of biological role, covalently attaches a chromophore to Cys residue(s) of phycobiliproteins. This Synechocystis sp. (strain ATCC 27184 / PCC 6803 / Kazusa) protein is Chromophore lyase CpcS/CpeS 1.